Reading from the N-terminus, the 133-residue chain is Phosphoribosyl-AMP cyclohydrolase (133 aa).

Mg(2+) is bound at residue aspartate 77. Cysteine 78 contributes to the Zn(2+) binding site. Mg(2+) is bound by residues aspartate 79 and aspartate 81. Zn(2+) contacts are provided by cysteine 95 and cysteine 102.

Belongs to the PRA-CH family. As to quaternary structure, homodimer. Mg(2+) serves as cofactor. Requires Zn(2+) as cofactor.

It localises to the cytoplasm. The enzyme catalyses 1-(5-phospho-beta-D-ribosyl)-5'-AMP + H2O = 1-(5-phospho-beta-D-ribosyl)-5-[(5-phospho-beta-D-ribosylamino)methylideneamino]imidazole-4-carboxamide. It functions in the pathway amino-acid biosynthesis; L-histidine biosynthesis; L-histidine from 5-phospho-alpha-D-ribose 1-diphosphate: step 3/9. Its function is as follows. Catalyzes the hydrolysis of the adenine ring of phosphoribosyl-AMP. This chain is Phosphoribosyl-AMP cyclohydrolase, found in Pseudomonas fluorescens (strain Pf0-1).